The chain runs to 875 residues: Ubiquitin-protein ligase E3A (875 aa).

The segment at 44-83 (CGNEACTNEFCASCPTFLRMDNNAAAIKALELYKINAKLC) adopts a C4-type; atypical zinc-finger fold. Over residues 175-186 (KEELKSLQAKDE) the composition is skewed to basic and acidic residues. The tract at residues 175 to 226 (KEELKSLQAKDEDKDEDEKEKAACSAAAMEEDSEASSSRIGDSSQGDNNLQK) is disordered. The segment covering 213–225 (RIGDSSQGDNNLQ) has biased composition (polar residues). S218 carries the post-translational modification Phosphoserine. An E6-binding region spans residues 401–418 (IPESSELTLQELLGEERR). Residues 418 to 517 (RNKKGPRVDP…TVLYSLVQGQ (100 aa)) are interaction with HCV core protein. Position 659 is a phosphotyrosine; by ABL1 (Y659). Residues 776 to 875 (YDGGYTRDSV…ITYAKGFGML (100 aa)) form the HECT domain. C843 (glycyl thioester intermediate) is an active-site residue.

The active form is probably a homotrimer. Binds UBQLN1 and UBQLN2. Interacts with the 26S proteasome. Interacts with BPY2. Interacts with HIF1AN, MAPK6 and NEURL4; interaction with MAPK6 may be mediated by NEURL4. Interacts with the proteasomal subunit PSMD4. Interacts with ESR1 and WBP2. Interacts with BMAL1. Interacts with ARC. In terms of assembly, (Microbial infection) Interacts with HCV core protein and targets it to degradation. As to quaternary structure, (Microbial infection) Interacts with the E6 protein of the cancer-associated human papillomavirus types 16 and 18. The E6/E6-AP complex binds to and targets the p53/TP53 tumor-suppressor protein for ubiquitin-mediated proteolysis. Phosphorylation at Tyr-659 by ABL1 impairs E3 ligase activity and protects p53/TP53 from degradation in (HPV)-infected cells.

The protein localises to the cytoplasm. The protein resides in the nucleus. It catalyses the reaction S-ubiquitinyl-[E2 ubiquitin-conjugating enzyme]-L-cysteine + [acceptor protein]-L-lysine = [E2 ubiquitin-conjugating enzyme]-L-cysteine + N(6)-ubiquitinyl-[acceptor protein]-L-lysine.. The protein operates within protein modification; protein ubiquitination. E3 ubiquitin-protein ligase which accepts ubiquitin from an E2 ubiquitin-conjugating enzyme in the form of a thioester and transfers it to its substrates. Several substrates have been identified including the BMAL1, ARC, LAMTOR1, RAD23A and RAD23B, MCM7 (which is involved in DNA replication), annexin A1, the PML tumor suppressor, and the cell cycle regulator CDKN1B. Additionally, may function as a cellular quality control ubiquitin ligase by helping the degradation of the cytoplasmic misfolded proteins. Finally, UBE3A also promotes its own degradation in vivo. Plays an important role in the regulation of the circadian clock: involved in the ubiquitination of the core clock component BMAL1, leading to its proteasomal degradation. Acts as transcriptional coactivator of progesterone receptor PGR upon progesterone hormone activation. Acts as a regulator of synaptic development by mediating ubiquitination and degradation of ARC. Required for synaptic remodeling in neurons by mediating ubiquitination and degradation of LAMTOR1, thereby limiting mTORC1 signaling and activity-dependent synaptic remodeling. Synergizes with WBP2 in enhancing PGR activity. Its function is as follows. (Microbial infection) Catalyzes the high-risk human papilloma virus E6-mediated ubiquitination of p53/TP53, contributing to the neoplastic progression of cells infected by these viruses. The polypeptide is Ubiquitin-protein ligase E3A (Homo sapiens (Human)).